The primary structure comprises 264 residues: MNAIQIQDCGFWLIHVNQDIYFPDNNLPFGTAESLNLTHRNAARIGEWEGYPLFVVKEDPAEQREWTALRSLLRLPEEKFYLLNRGVELNYFLKTHRRCGKCGHQTEMARDEWAVQCQNDACGYRTYPVICPSIIVAVRRGKEILLANHTRHMPKNGGSGMYTTLAGFVEIGESFEQTVEREVFEETGLKVKNIRYFGSQPWAFPNSQMVGFLADYDSGEIRLQEDELNDARWFHCDQPLPELPPEGTIALKLINATLNICRQA.

A substrate-binding site is contributed by arginine 70. Residues cysteine 99 and cysteine 102 each coordinate Zn(2+). Glutamate 112 is a binding site for substrate. Residues cysteine 117 and cysteine 122 each contribute to the Zn(2+) site. Tyrosine 127 contacts substrate. The Nudix hydrolase domain occupies 128–257; it reads PVICPSIIVA…TIALKLINAT (130 aa). A divalent metal cation contacts are provided by alanine 166, glutamate 182, and glutamate 186. Positions 167–188 match the Nudix box motif; it reads GFVEIGESFEQTVEREVFEETG. 200–207 contributes to the substrate binding site; that stretch reads QPWAFPNS. Glutamate 227 contacts a divalent metal cation. A substrate-binding site is contributed by alanine 250.

This sequence belongs to the Nudix hydrolase family. NudC subfamily. Homodimer. Mg(2+) serves as cofactor. The cofactor is Mn(2+). Requires Zn(2+) as cofactor.

It catalyses the reaction a 5'-end NAD(+)-phospho-ribonucleoside in mRNA + H2O = a 5'-end phospho-adenosine-phospho-ribonucleoside in mRNA + beta-nicotinamide D-ribonucleotide + 2 H(+). The catalysed reaction is NAD(+) + H2O = beta-nicotinamide D-ribonucleotide + AMP + 2 H(+). It carries out the reaction NADH + H2O = reduced beta-nicotinamide D-ribonucleotide + AMP + 2 H(+). In terms of biological role, mRNA decapping enzyme that specifically removes the nicotinamide adenine dinucleotide (NAD) cap from a subset of mRNAs by hydrolyzing the diphosphate linkage to produce nicotinamide mononucleotide (NMN) and 5' monophosphate mRNA. The NAD-cap is present at the 5'-end of some mRNAs and stabilizes RNA against 5'-processing. Has preference for mRNAs with a 5'-end purine. Catalyzes the hydrolysis of a broad range of dinucleotide pyrophosphates. This is NAD-capped RNA hydrolase NudC from Actinobacillus succinogenes (strain ATCC 55618 / DSM 22257 / CCUG 43843 / 130Z).